The following is a 35-amino-acid chain: Photosystem II reaction center protein T (35 aa).

The chain crosses the membrane as a helical span at residues 3–23; the sequence is ALVYTFLLVSTLGIIFFAIFF.

It belongs to the PsbT family. PSII is composed of 1 copy each of membrane proteins PsbA, PsbB, PsbC, PsbD, PsbE, PsbF, PsbH, PsbI, PsbJ, PsbK, PsbL, PsbM, PsbT, PsbY, PsbZ, Psb30/Ycf12, at least 3 peripheral proteins of the oxygen-evolving complex and a large number of cofactors. It forms dimeric complexes.

Its subcellular location is the plastid. It is found in the chloroplast thylakoid membrane. Functionally, found at the monomer-monomer interface of the photosystem II (PS II) dimer, plays a role in assembly and dimerization of PSII. PSII is a light-driven water plastoquinone oxidoreductase, using light energy to abstract electrons from H(2)O, generating a proton gradient subsequently used for ATP formation. In Schisandra chinensis (Chinese magnolia vine), this protein is Photosystem II reaction center protein T.